Reading from the N-terminus, the 109-residue chain is Trafficking protein particle complex subunit 2-like protein (109 aa).

Belongs to the TRAPP small subunits family. Sedlin subfamily. As to quaternary structure, component of the multisubunit TRAPP (transport protein particle) complex, which includes at least TRAPPC2, TRAPPC2L, TRAPPC3, TRAPPC3L, TRAPPC4, TRAPPC5, TRAPPC8, TRAPPC9, TRAPPC10, TRAPPC11 and TRAPPC12. Interacts with the heterodimer TRAPPC3-TRAPPC6A.

Its subcellular location is the cytoplasm. It localises to the perinuclear region. The protein resides in the endoplasmic reticulum. It is found in the golgi apparatus. May play a role in vesicular transport from endoplasmic reticulum to Golgi. The chain is Trafficking protein particle complex subunit 2-like protein (TRAPPC2L) from Pongo abelii (Sumatran orangutan).